The sequence spans 371 residues: MNEIAMNAPWPPHAGATTALASLQPTTGIRIEGVRKVYAARKSSAEVVALDGINLHVPKGSIQGVIGRSGAGKSTLIRLVNGLDKPSEGKVFVNDVEITSLSEPELRQARRSIGMVFQHFNLLSSRTAFGNVALPLEIAGTPKTEIEKRVLPLLDMVGLADKRDRYPAELSGGQKQRVGIARALATEPSVLLSDEATSALDPETTDQILDLLKQINRDLHLTILFITHEMAVVKALADRVAVIEGGRIVEEGSTFDVFATPRHEVTRRFVSSVTGSGAPDWLLAQPHEPPGGKAVLRITFKGSDANQPLLSHIARTLDIDINILSGQVEMIADHPFGTLIVSLTPSPDILRQVIAKLSTNNNLVEQLGYVA.

One can recognise an ABC transporter domain in the interval 29 to 270; the sequence is IRIEGVRKVY…PRHEVTRRFV (242 aa). Position 67–74 (67–74) interacts with ATP; sequence GRSGAGKS.

Belongs to the ABC transporter superfamily. Methionine importer (TC 3.A.1.24) family. As to quaternary structure, the complex is composed of two ATP-binding proteins (MetN), two transmembrane proteins (MetI) and a solute-binding protein (MetQ).

The protein resides in the cell inner membrane. It carries out the reaction L-methionine(out) + ATP + H2O = L-methionine(in) + ADP + phosphate + H(+). The catalysed reaction is D-methionine(out) + ATP + H2O = D-methionine(in) + ADP + phosphate + H(+). Functionally, part of the ABC transporter complex MetNIQ involved in methionine import. Responsible for energy coupling to the transport system. The sequence is that of Methionine import ATP-binding protein MetN from Rhodopseudomonas palustris (strain BisA53).